The chain runs to 191 residues: Stress response regulator protein 1 (191 aa).

The Response regulatory domain maps to 62 to 181 (SFLLVDDNEI…TNYILQKIEQ (120 aa)). D114 carries the 4-aspartylphosphate modification.

Required for stress adaptation, morphogenesis and virulence. This is Stress response regulator protein 1 (SRR1) from Clavispora lusitaniae (strain ATCC 42720) (Yeast).